A 433-amino-acid polypeptide reads, in one-letter code: Sulfhydrylase FUB7 (433 aa).

K211 is subject to N6-(pyridoxal phosphate)lysine.

Belongs to the trans-sulfuration enzymes family. The cofactor is pyridoxal 5'-phosphate.

The protein operates within mycotoxin biosynthesis. Functionally, sulfhydrylase; part of the gene cluster that mediates the biosynthesis of fusaric acid, a mycotoxin with low to moderate toxicity to animals and humans, but with high phytotoxic properties. L-aspartate is suggested as fusaric acid amino acid precursor that is activated and further processed to O-acetyl-L-homoserine by cluster enzymes aspartate kinase FUB3 and homoserine O-acetyltransferase FUB5, as well as enzymes of the primary metabolism. The polyketide synthase (PKS) FUB1 generates the triketide trans-2-hexenal which is presumptively released by the hydrolase FUB4 and linked to the NRPS-bound amino acid precursor by NAD(P)-dependent dehydrogenase FUB6. FUB1, FUB4, and the non-canonical NRPS Fub8 may form an enzyme complex. Further processing of the NRPS-bound intermediate might be carried out by FUB6 and the sulfhydrylase FUB7, enabling a spontaneous electrocyclization to close the carbon backbone of fusaric acid. Dihydrofusaric acid is likely to be released via reduction by the thioester reductase (TR) domain of FUB8 whereupon the final oxidation to fusaric acid may (also) be performed by the FMN-dependent dehydrogenase FUB9. This chain is Sulfhydrylase FUB7, found in Fusarium oxysporum f. sp. lycopersici (strain 4287 / CBS 123668 / FGSC 9935 / NRRL 34936) (Fusarium vascular wilt of tomato).